Consider the following 613-residue polypeptide: Dihydroxy-acid dehydratase (613 aa).

Aspartate 81 is a Mg(2+) binding site. Cysteine 122 lines the [2Fe-2S] cluster pocket. Residues aspartate 123 and lysine 124 each contribute to the Mg(2+) site. Lysine 124 is modified (N6-carboxylysine). Cysteine 195 lines the [2Fe-2S] cluster pocket. Glutamate 491 serves as a coordination point for Mg(2+). Serine 517 serves as the catalytic Proton acceptor.

Belongs to the IlvD/Edd family. Homodimer. It depends on [2Fe-2S] cluster as a cofactor. The cofactor is Mg(2+).

It carries out the reaction (2R)-2,3-dihydroxy-3-methylbutanoate = 3-methyl-2-oxobutanoate + H2O. The catalysed reaction is (2R,3R)-2,3-dihydroxy-3-methylpentanoate = (S)-3-methyl-2-oxopentanoate + H2O. It functions in the pathway amino-acid biosynthesis; L-isoleucine biosynthesis; L-isoleucine from 2-oxobutanoate: step 3/4. Its pathway is amino-acid biosynthesis; L-valine biosynthesis; L-valine from pyruvate: step 3/4. In terms of biological role, functions in the biosynthesis of branched-chain amino acids. Catalyzes the dehydration of (2R,3R)-2,3-dihydroxy-3-methylpentanoate (2,3-dihydroxy-3-methylvalerate) into 2-oxo-3-methylpentanoate (2-oxo-3-methylvalerate) and of (2R)-2,3-dihydroxy-3-methylbutanoate (2,3-dihydroxyisovalerate) into 2-oxo-3-methylbutanoate (2-oxoisovalerate), the penultimate precursor to L-isoleucine and L-valine, respectively. This Aeromonas salmonicida (strain A449) protein is Dihydroxy-acid dehydratase.